We begin with the raw amino-acid sequence, 529 residues long: MTERRDNVSHAPDAIEGPNDGAHAEDTSPGFFSFENLGVAQVQVVGGTLNGFSIGFVAVYILLYEVATNCSLFKTTEACKAVGSYGCEWKDTEVCSWKKECDSDSDGVNPCESLIGYSSLYSGIFASAMIVGSMVGSIIAGKCITMFGLKKSFIIVGVMSVVASALNHISVATNEFWVLCAGRVLMGIGLGVVCVICPMYVNENAHPKLSKVDGVLFQVFITFGIMLAAMLGLILDKTVNYDNDPDMAGRFHGFCAVSSVLSVAMFLVGMFLRESTATFSQDDDGKADGGMDPNEYGWGQMLWPLFMGAVTAGTLQLTGINAVMNYAPKITENLGMDPSLGNFLVMAWNFVTSLVAIPLASRFTMRQMFITCSFVASCMCLFLCGIPVFPGVAEEKVKNGVATTGIALFIAAFEFGVGSCFFVLAQDLFPPSFRPKGSSFVVMMQFIFNILINLLYPITTEAISGGATGDQDKGQAVVFILFGLIGLICFVLQFFYLYPYDANQDHENDHGTEPVERILSPVDVPTPRN.

The tract at residues 1 to 22 (MTERRDNVSHAPDAIEGPNDGA) is disordered. Topologically, residues 1–43 (MTERRDNVSHAPDAIEGPNDGAHAEDTSPGFFSFENLGVAQVQ) are cytoplasmic. The helical transmembrane segment at 44–64 (VVGGTLNGFSIGFVAVYILLY) threads the bilayer. The Extracellular portion of the chain corresponds to 65–119 (EVATNCSLFKTTEACKAVGSYGCEWKDTEVCSWKKECDSDSDGVNPCESLIGYSS). The helical transmembrane segment at 120 to 140 (LYSGIFASAMIVGSMVGSIIA) threads the bilayer. At 141-152 (GKCITMFGLKKS) the chain is on the cytoplasmic side. A helical transmembrane segment spans residues 153–173 (FIIVGVMSVVASALNHISVAT). At 174–175 (NE) the chain is on the extracellular side. A helical membrane pass occupies residues 176-196 (FWVLCAGRVLMGIGLGVVCVI). The Cytoplasmic portion of the chain corresponds to 197–214 (CPMYVNENAHPKLSKVDG). The chain crosses the membrane as a helical span at residues 215–235 (VLFQVFITFGIMLAAMLGLIL). The Extracellular segment spans residues 236 to 250 (DKTVNYDNDPDMAGR). The chain crosses the membrane as a helical span at residues 251–271 (FHGFCAVSSVLSVAMFLVGMF). The Cytoplasmic portion of the chain corresponds to 272–300 (LRESTATFSQDDDGKADGGMDPNEYGWGQ). Residues 301–321 (MLWPLFMGAVTAGTLQLTGIN) form a helical membrane-spanning segment. Over 322–339 (AVMNYAPKITENLGMDPS) the chain is Extracellular. A helical transmembrane segment spans residues 340 to 360 (LGNFLVMAWNFVTSLVAIPLA). Residues 361–368 (SRFTMRQM) lie on the Cytoplasmic side of the membrane. A helical membrane pass occupies residues 369–389 (FITCSFVASCMCLFLCGIPVF). At 390 to 404 (PGVAEEKVKNGVATT) the chain is on the extracellular side. A helical membrane pass occupies residues 405 to 425 (GIALFIAAFEFGVGSCFFVLA). Residues 426–439 (QDLFPPSFRPKGSS) are Cytoplasmic-facing. A helical transmembrane segment spans residues 440–460 (FVVMMQFIFNILINLLYPITT). At 461–476 (EAISGGATGDQDKGQA) the chain is on the extracellular side. The helical transmembrane segment at 477–497 (VVFILFGLIGLICFVLQFFYL) threads the bilayer. The Cytoplasmic portion of the chain corresponds to 498–529 (YPYDANQDHENDHGTEPVERILSPVDVPTPRN). The tract at residues 508–529 (NDHGTEPVERILSPVDVPTPRN) is disordered.

This sequence belongs to the major facilitator superfamily. Sugar transporter (TC 2.A.1.1) family.

It is found in the membrane. Facilitative glucose transporter. The polypeptide is Glucose transporter 2A (THT2A) (Trypanosoma brucei brucei).